Reading from the N-terminus, the 78-residue chain is Exodeoxyribonuclease 7 small subunit (78 aa).

This sequence belongs to the XseB family. Heterooligomer composed of large and small subunits.

It localises to the cytoplasm. The enzyme catalyses Exonucleolytic cleavage in either 5'- to 3'- or 3'- to 5'-direction to yield nucleoside 5'-phosphates.. In terms of biological role, bidirectionally degrades single-stranded DNA into large acid-insoluble oligonucleotides, which are then degraded further into small acid-soluble oligonucleotides. The protein is Exodeoxyribonuclease 7 small subunit of Paracoccus zeaxanthinifaciens.